A 410-amino-acid chain; its full sequence is Arginine deiminase (410 aa).

Cysteine 399 (amidino-cysteine intermediate) is an active-site residue.

The protein belongs to the arginine deiminase family.

Its subcellular location is the cytoplasm. It carries out the reaction L-arginine + H2O = L-citrulline + NH4(+). It functions in the pathway amino-acid degradation; L-arginine degradation via ADI pathway; carbamoyl phosphate from L-arginine: step 1/2. The chain is Arginine deiminase from Listeria monocytogenes serovar 1/2a (strain ATCC BAA-679 / EGD-e).